Here is a 290-residue protein sequence, read N- to C-terminus: MAATSLLYNQLKAAEPFFLLAGPNVIESEEHILRMAKHIKDISTKVGLPLVFKSSFDKANRTSSKSFRGPGMAEGLKILEKVKVAYDLPIVTDVHESSQCEAVGKVADIIQIPAFLCRQTDLLVAAAQTGKIINIKKGQFCAPSVMENSAEKIRLAGNPNVMVCERGTMFGYNDLIVDPRNFEWMREANCPVVADITHSLQQPAGKKLDGGGVASGGLRELIPCIARTAVAVGVDGIFMEVHDDPLSAPVDGPTQWPLRHLEELLEELIAIARVTKGKQRLQIDLTPYRD.

A2 is modified (N-acetylalanine).

It belongs to the KdsA family. As to expression, expressed in shoots.

It localises to the cytoplasm. It catalyses the reaction D-arabinose 5-phosphate + phosphoenolpyruvate + H2O = 3-deoxy-alpha-D-manno-2-octulosonate-8-phosphate + phosphate. Functionally, catalyzes the stereospecific condensation of D-arabinose 5-phosphate and phosphoenolpyruvate to form 3-deoxy-D-manno-octulosonate 8-phosphate (KDO-8-phosphate) and inorganic phosphate. Involved in the biosynthesis of 3-deoxy-D-manno-octulosonate (KDO) which is an indispensable component of rhamnogalacturonan II (RG-II), a structurally complex pectic polysaccharide of the primary cell wall. RG-II is essential for the cell wall integrity of rapidly growing tissues and pollen tube growth and elongation. The sequence is that of 2-dehydro-3-deoxyphosphooctonate aldolase 1 (KDSA1) from Arabidopsis thaliana (Mouse-ear cress).